The chain runs to 456 residues: Bifunctional protein GlmU (456 aa).

The interval 1–229 is pyrophosphorylase; sequence MLNSAMSVVI…ISETDGVNNR (229 aa). Residues 11–14, Lys-25, Gln-76, 81–82, 103–105, Gly-140, Glu-154, Asn-169, and Asn-227 contribute to the UDP-N-acetyl-alpha-D-glucosamine site; these read LAAG, GT, and YGD. Asp-105 is a Mg(2+) binding site. Asn-227 provides a ligand contact to Mg(2+). A linker region spans residues 230–250; it reads LQLSRLERIYQAEQAEKLLLS. The N-acetyltransferase stretch occupies residues 251 to 456; it reads GVMLRDPARF…QGWQRPVKKK (206 aa). Residues Arg-333 and Lys-351 each coordinate UDP-N-acetyl-alpha-D-glucosamine. The active-site Proton acceptor is His-363. Tyr-366 and Asn-377 together coordinate UDP-N-acetyl-alpha-D-glucosamine. Acetyl-CoA-binding positions include Ala-380, 386-387, Ser-405, Ala-423, and Arg-440; that span reads NY.

In the N-terminal section; belongs to the N-acetylglucosamine-1-phosphate uridyltransferase family. The protein in the C-terminal section; belongs to the transferase hexapeptide repeat family. In terms of assembly, homotrimer. Mg(2+) serves as cofactor.

The protein localises to the cytoplasm. The enzyme catalyses alpha-D-glucosamine 1-phosphate + acetyl-CoA = N-acetyl-alpha-D-glucosamine 1-phosphate + CoA + H(+). It carries out the reaction N-acetyl-alpha-D-glucosamine 1-phosphate + UTP + H(+) = UDP-N-acetyl-alpha-D-glucosamine + diphosphate. The protein operates within nucleotide-sugar biosynthesis; UDP-N-acetyl-alpha-D-glucosamine biosynthesis; N-acetyl-alpha-D-glucosamine 1-phosphate from alpha-D-glucosamine 6-phosphate (route II): step 2/2. It participates in nucleotide-sugar biosynthesis; UDP-N-acetyl-alpha-D-glucosamine biosynthesis; UDP-N-acetyl-alpha-D-glucosamine from N-acetyl-alpha-D-glucosamine 1-phosphate: step 1/1. It functions in the pathway bacterial outer membrane biogenesis; LPS lipid A biosynthesis. Its function is as follows. Catalyzes the last two sequential reactions in the de novo biosynthetic pathway for UDP-N-acetylglucosamine (UDP-GlcNAc). The C-terminal domain catalyzes the transfer of acetyl group from acetyl coenzyme A to glucosamine-1-phosphate (GlcN-1-P) to produce N-acetylglucosamine-1-phosphate (GlcNAc-1-P), which is converted into UDP-GlcNAc by the transfer of uridine 5-monophosphate (from uridine 5-triphosphate), a reaction catalyzed by the N-terminal domain. This Salmonella paratyphi A (strain ATCC 9150 / SARB42) protein is Bifunctional protein GlmU.